Here is a 38-residue protein sequence, read N- to C-terminus: Allatostatin-C (38 aa).

Residues 1 to 19 constitute a propeptide that is removed on maturation; sequence MRRALDGPGSSSLDTRQAD. Pyrrolidone carboxylic acid; partial is present on Q22.

It belongs to the allatostatin family. In its non-pyroglutamate form, expressed in antennal lobe (AL), corpora cardiaca (CC), corpora allata (CA) and gnathal ganglion (GNG) with expression in AL detected in most animals and expression in CC, CA and GNG detected in few animals (at protein level). In its pyroglutamate form, expressed in antennal lobe (AL), corpora cardiaca (CC) and corpora allata (CA) with expression detected in few animals (at protein level). Not expressed in GNG (protein level).

The protein resides in the secreted. Strongly inhibits juvenile hormone biosynthesis. In Agrotis ipsilon (Black cutworm moth), this protein is Allatostatin-C.